Here is a 316-residue protein sequence, read N- to C-terminus: Probable porphobilinogen deaminase (316 aa).

Cys-234 carries the post-translational modification S-(dipyrrolylmethanemethyl)cysteine.

Belongs to the HMBS family. Dipyrromethane serves as cofactor.

It carries out the reaction 4 porphobilinogen + H2O = hydroxymethylbilane + 4 NH4(+). It participates in porphyrin-containing compound metabolism; protoporphyrin-IX biosynthesis; coproporphyrinogen-III from 5-aminolevulinate: step 2/4. Tetrapolymerization of the monopyrrole PBG into the hydroxymethylbilane pre-uroporphyrinogen in several discrete steps. The chain is Probable porphobilinogen deaminase from Methanosarcina mazei (strain ATCC BAA-159 / DSM 3647 / Goe1 / Go1 / JCM 11833 / OCM 88) (Methanosarcina frisia).